The chain runs to 100 residues: NADH-quinone oxidoreductase subunit K (100 aa).

3 consecutive transmembrane segments (helical) span residues 4–24 (LTHG…GLVI), 28–48 (LLFM…AFVV), and 60–80 (VMYI…LALL).

Belongs to the complex I subunit 4L family. As to quaternary structure, NDH-1 is composed of 13 different subunits. Subunits NuoA, H, J, K, L, M, N constitute the membrane sector of the complex.

Its subcellular location is the cell inner membrane. The catalysed reaction is a quinone + NADH + 5 H(+)(in) = a quinol + NAD(+) + 4 H(+)(out). Its function is as follows. NDH-1 shuttles electrons from NADH, via FMN and iron-sulfur (Fe-S) centers, to quinones in the respiratory chain. The immediate electron acceptor for the enzyme in this species is believed to be ubiquinone. Couples the redox reaction to proton translocation (for every two electrons transferred, four hydrogen ions are translocated across the cytoplasmic membrane), and thus conserves the redox energy in a proton gradient. This is NADH-quinone oxidoreductase subunit K from Salmonella agona (strain SL483).